A 125-amino-acid chain; its full sequence is Small ribosomal subunit protein uS13 (125 aa).

A disordered region spans residues 92–125 (RRSLPVRGQNTQTNARTRKGKRKTVAGKKKAARK). Residues 107–125 (RTRKGKRKTVAGKKKAARK) are compositionally biased toward basic residues.

It belongs to the universal ribosomal protein uS13 family. As to quaternary structure, part of the 30S ribosomal subunit. Forms a loose heterodimer with protein S19. Forms two bridges to the 50S subunit in the 70S ribosome.

Its function is as follows. Located at the top of the head of the 30S subunit, it contacts several helices of the 16S rRNA. In the 70S ribosome it contacts the 23S rRNA (bridge B1a) and protein L5 of the 50S subunit (bridge B1b), connecting the 2 subunits; these bridges are implicated in subunit movement. Contacts the tRNAs in the A and P-sites. This chain is Small ribosomal subunit protein uS13, found in Chlorobium luteolum (strain DSM 273 / BCRC 81028 / 2530) (Pelodictyon luteolum).